A 183-amino-acid chain; its full sequence is Disulfide bond formation protein B 2 (183 aa).

Over 1–9 (MSLACSRSL) the chain is Cytoplasmic. The chain crosses the membrane as a helical span at residues 10–26 (FFMAFTAGILALGASYY). Over 27 to 44 (LEYAVGLVPCSLCLVQRL) the chain is Periplasmic. An intrachain disulfide couples Cys36 to Cys39. The chain crosses the membrane as a helical span at residues 45–61 (FMSVLTLCCGLAAVHGP). The Cytoplasmic portion of the chain corresponds to 62–68 (QRVGLSL). The chain crosses the membrane as a helical span at residues 69-85 (YWMVTLLSSLGGTTAAW). Over 86–142 (RQVLFQSDSLQELAHCAPNPEEMFSSLPWLCALMRMFNDTADCAELSWTLFDLSIPE) the chain is Periplasmic. Cys101 and Cys128 are disulfide-bonded. The chain crosses the membrane as a helical span at residues 143–161 (WSLLFFVGMSILAVYQLLR). Residues 162–183 (QVWMALQRPLSGQPSHPALVRD) lie on the Cytoplasmic side of the membrane.

It belongs to the DsbB family.

It is found in the cell inner membrane. In terms of biological role, required for disulfide bond formation in some periplasmic proteins. Acts by oxidizing the DsbA protein. The sequence is that of Disulfide bond formation protein B 2 from Pseudomonas fluorescens (strain Pf0-1).